The following is a 267-amino-acid chain: Small ribosomal subunit protein uS2 (267 aa).

A disordered region spans residues 224–244; that stretch reads GRQGEDEDVTEDSFKDNKDAK. Positions 235 to 244 are enriched in basic and acidic residues; the sequence is DSFKDNKDAK.

It belongs to the universal ribosomal protein uS2 family.

This Lactiplantibacillus plantarum (strain ATCC BAA-793 / NCIMB 8826 / WCFS1) (Lactobacillus plantarum) protein is Small ribosomal subunit protein uS2.